Reading from the N-terminus, the 122-residue chain is Ribosome-binding factor A (122 aa).

This sequence belongs to the RbfA family. In terms of assembly, monomer. Binds 30S ribosomal subunits, but not 50S ribosomal subunits or 70S ribosomes.

The protein resides in the cytoplasm. One of several proteins that assist in the late maturation steps of the functional core of the 30S ribosomal subunit. Associates with free 30S ribosomal subunits (but not with 30S subunits that are part of 70S ribosomes or polysomes). Required for efficient processing of 16S rRNA. May interact with the 5'-terminal helix region of 16S rRNA. This chain is Ribosome-binding factor A, found in Prosthecochloris aestuarii (strain DSM 271 / SK 413).